A 216-amino-acid polypeptide reads, in one-letter code: Phosphatidylserine decarboxylase proenzyme (216 aa).

S182 serves as the catalytic Schiff-base intermediate with substrate; via pyruvic acid. The residue at position 182 (S182) is a Pyruvic acid (Ser); by autocatalysis.

This sequence belongs to the phosphatidylserine decarboxylase family. PSD-A subfamily. In terms of assembly, heterodimer of a large membrane-associated beta subunit and a small pyruvoyl-containing alpha subunit. Requires pyruvate as cofactor. In terms of processing, is synthesized initially as an inactive proenzyme. Formation of the active enzyme involves a self-maturation process in which the active site pyruvoyl group is generated from an internal serine residue via an autocatalytic post-translational modification. Two non-identical subunits are generated from the proenzyme in this reaction, and the pyruvate is formed at the N-terminus of the alpha chain, which is derived from the carboxyl end of the proenzyme. The post-translation cleavage follows an unusual pathway, termed non-hydrolytic serinolysis, in which the side chain hydroxyl group of the serine supplies its oxygen atom to form the C-terminus of the beta chain, while the remainder of the serine residue undergoes an oxidative deamination to produce ammonia and the pyruvoyl prosthetic group on the alpha chain.

The protein localises to the cell membrane. The catalysed reaction is a 1,2-diacyl-sn-glycero-3-phospho-L-serine + H(+) = a 1,2-diacyl-sn-glycero-3-phosphoethanolamine + CO2. It functions in the pathway phospholipid metabolism; phosphatidylethanolamine biosynthesis; phosphatidylethanolamine from CDP-diacylglycerol: step 2/2. Catalyzes the formation of phosphatidylethanolamine (PtdEtn) from phosphatidylserine (PtdSer). In Burkholderia pseudomallei (strain 1106a), this protein is Phosphatidylserine decarboxylase proenzyme.